Here is a 506-residue protein sequence, read N- to C-terminus: (+)-piperitol/(+)-sesamin synthase CYP81Q2 (506 aa).

A helical transmembrane segment spans residues 3–23 (AEMLYSALALTFAIFMVYRIL). Cys439 serves as a coordination point for heme.

Belongs to the cytochrome P450 family. It depends on heme as a cofactor. In terms of tissue distribution, expressed in seeds.

It is found in the membrane. The catalysed reaction is (+)-piperitol + reduced [NADPH--hemoprotein reductase] + O2 = (+)-sesamin + oxidized [NADPH--hemoprotein reductase] + 2 H2O + H(+). It catalyses the reaction (+)-pinoresinol + reduced [NADPH--hemoprotein reductase] + O2 = (+)-piperitol + oxidized [NADPH--hemoprotein reductase] + 2 H2O + H(+). Its function is as follows. Involved in the biosynthesis of (+)-sesamin, a furofuran class lignan. Functions in a dual catalytic mode. Catalyzes the synthesis of (+)-sesamin from (+)- pinoresinol by formation of two successive methylenedioxy bridges on (+)-pinoresinol and (+)-piperitol, respectively. This chain is (+)-piperitol/(+)-sesamin synthase CYP81Q2, found in Sesamum radiatum (Black benniseed).